We begin with the raw amino-acid sequence, 147 residues long: Hemoglobin subunit delta (147 aa).

In terms of domain architecture, Globin spans 3 to 147 (HLTPEEKALV…VANALAHKYH (145 aa)). The residue at position 51 (Ser51) is a Phosphoserine. Positions 64 and 93 each coordinate heme b.

The protein belongs to the globin family. Heterotetramer of two delta chains and two alpha chains. As to expression, red blood cells.

This chain is Hemoglobin subunit delta (HBD), found in Trichechus manatus (Caribbean manatee).